A 571-amino-acid polypeptide reads, in one-letter code: Proline--tRNA ligase (571 aa).

Belongs to the class-II aminoacyl-tRNA synthetase family. ProS type 1 subfamily. In terms of assembly, homodimer.

The protein resides in the cytoplasm. The enzyme catalyses tRNA(Pro) + L-proline + ATP = L-prolyl-tRNA(Pro) + AMP + diphosphate. Functionally, catalyzes the attachment of proline to tRNA(Pro) in a two-step reaction: proline is first activated by ATP to form Pro-AMP and then transferred to the acceptor end of tRNA(Pro). As ProRS can inadvertently accommodate and process non-cognate amino acids such as alanine and cysteine, to avoid such errors it has two additional distinct editing activities against alanine. One activity is designated as 'pretransfer' editing and involves the tRNA(Pro)-independent hydrolysis of activated Ala-AMP. The other activity is designated 'posttransfer' editing and involves deacylation of mischarged Ala-tRNA(Pro). The misacylated Cys-tRNA(Pro) is not edited by ProRS. In Acinetobacter baumannii (strain ATCC 17978 / DSM 105126 / CIP 53.77 / LMG 1025 / NCDC KC755 / 5377), this protein is Proline--tRNA ligase.